The following is a 249-amino-acid chain: MEAAADRPAETRSRVEKDSRRAKKDSPAKTQSPAQDTSIMLRSNADTGKVLALPEHKKKRKGYLPAESVKILRDWMYKHRFRAYPSEAEKRMLSKKTNLSLSQISNWFINARRRILPDMLQRRGNDPTVGHKTGKDAHATHLQSTDASVPAKSGPRGSDNVQSLPLRSSPKGQMSGEKIPEPGSAPSQKLTMIAQPKKKVKVSNITSSSSPEPVSTEEYADFSSFQLLVDAAVQRAAELELEKNQESNP.

Residues 1 to 27 (MEAAADRPAETRSRVEKDSRRAKKDSP) are compositionally biased toward basic and acidic residues. Disordered regions lie at residues 1-60 (MEAA…KKKR) and 121-215 (QRRG…EPVS). A compositionally biased stretch (polar residues) spans 28–46 (AKTQSPAQDTSIMLRSNAD). A DNA-binding region (homeobox; TALE-type) is located at residues 55-118 (EHKKKRKGYL…INARRRILPD (64 aa)). Polar residues predominate over residues 159–172 (DNVQSLPLRSSPKG). The segment covering 202–215 (VSNITSSSSPEPVS) has biased composition (low complexity).

Belongs to the TALE/TGIF homeobox family.

It localises to the nucleus. Its function is as follows. May have a transcription role in testis. The sequence is that of Homeobox protein TGIF2LX (TGIF2LX) from Miopithecus talapoin (Angolan talapoin).